Reading from the N-terminus, the 195-residue chain is NAD(P)H-quinone oxidoreductase subunit J, chloroplastic (195 aa).

It belongs to the complex I 30 kDa subunit family. As to quaternary structure, NDH is composed of at least 16 different subunits, 5 of which are encoded in the nucleus.

Its subcellular location is the plastid. The protein localises to the chloroplast thylakoid membrane. It carries out the reaction a plastoquinone + NADH + (n+1) H(+)(in) = a plastoquinol + NAD(+) + n H(+)(out). The catalysed reaction is a plastoquinone + NADPH + (n+1) H(+)(in) = a plastoquinol + NADP(+) + n H(+)(out). NDH shuttles electrons from NAD(P)H:plastoquinone, via FMN and iron-sulfur (Fe-S) centers, to quinones in the photosynthetic chain and possibly in a chloroplast respiratory chain. The immediate electron acceptor for the enzyme in this species is believed to be plastoquinone. Couples the redox reaction to proton translocation, and thus conserves the redox energy in a proton gradient. The protein is NAD(P)H-quinone oxidoreductase subunit J, chloroplastic of Chlorokybus atmophyticus (Soil alga).